A 602-amino-acid polypeptide reads, in one-letter code: MKSKVPMKNIRNFSIIAHIDHGKSTLADCLIAECNAISNREMTSQVMDTMDIEKERGITIKAQSVRLNYTLKGEDYVLNLIDTPGHVDFSYEVSRSLCSCEGALLVVDATQGVEAQTIANVYIALDNNLEILPVINKIDLPNANVLEVKQDIEDTIGIDCSNANEVSAKARLGIKDLLEKIITTIPAPSGDFNAPLKALIYDSWFDNYLGALALVRIMDGSINTEQEILVMGTGKKHGVLGLYYPNPLKKIPTKSLECGEIGIVSLGLKSVTDIAVGDTLTDAKNPTPKPIEGFMPAKPFVFAGLYPIETDRFEDLREALLKLQLNDCALNFEPESSVALGFGFRVGFLGLLHMEVIKERLEREFGLNLIATAPTVVYEVHLTDNSIKYVQNPSELPPENHIACIKEPFVRATIITPSEFLGNLMQLLNNKRGIQEKMEYLNQSRVMLTYSLPSNEIVMDFYDKLKSCTKGYASFDYEPIENREAHLVKLDVRVAGDVVDALSIIIDKNKAYEKGRALVETMKELIPRQLFEVAIQASVGNKIIARETIKSVGKNVTAKCYGGDITRKRKLLEKQKEGKKRMKAIGKVELPQEAFLAILKID.

Residues 8-189 (KNIRNFSIIA…KIITTIPAPS (182 aa)) enclose the tr-type G domain. Residues 20 to 25 (DHGKST) and 136 to 139 (NKID) contribute to the GTP site.

This sequence belongs to the TRAFAC class translation factor GTPase superfamily. Classic translation factor GTPase family. LepA subfamily.

It localises to the cell inner membrane. The enzyme catalyses GTP + H2O = GDP + phosphate + H(+). Required for accurate and efficient protein synthesis under certain stress conditions. May act as a fidelity factor of the translation reaction, by catalyzing a one-codon backward translocation of tRNAs on improperly translocated ribosomes. Back-translocation proceeds from a post-translocation (POST) complex to a pre-translocation (PRE) complex, thus giving elongation factor G a second chance to translocate the tRNAs correctly. Binds to ribosomes in a GTP-dependent manner. This chain is Elongation factor 4, found in Helicobacter pylori (strain Shi470).